The following is a 372-amino-acid chain: Cytochrome b (372 aa).

Transmembrane regions (helical) follow at residues 25-45 (FGSM…FLAI), 69-90 (WIMQ…YIHI), 105-125 (WLSG…GYVL), and 170-190 (FFAL…IHII). Heme b-binding residues include His-75 and His-89. Residues His-174 and His-188 each coordinate heme b. His-193 provides a ligand contact to a ubiquinone. The next 4 membrane-spanning stretches (helical) occupy residues 218–238 (YKDM…LSFS), 280–300 (LGGT…PFTH), 312–332 (LSQA…WTAS), and 339–358 (FVTI…ITIP).

It belongs to the cytochrome b family. In terms of assembly, the cytochrome bc1 complex contains 3 respiratory subunits (MT-CYB, CYC1 and UQCRFS1), 2 core proteins (UQCRC1 and UQCRC2) and probably 6 low-molecular weight proteins. It depends on heme b as a cofactor.

The protein resides in the mitochondrion inner membrane. Component of the ubiquinol-cytochrome c reductase complex (complex III or cytochrome b-c1 complex) that is part of the mitochondrial respiratory chain. The b-c1 complex mediates electron transfer from ubiquinol to cytochrome c. Contributes to the generation of a proton gradient across the mitochondrial membrane that is then used for ATP synthesis. This is Cytochrome b (MT-CYB) from Naja multifasciata (Burrowing cobra).